The chain runs to 201 residues: CASP-like protein 2D1 (201 aa).

Residues 1–26 (MRSGEGSTAAAAAAEEEKVKVAAPFR) are Cytoplasmic-facing. A helical transmembrane segment spans residues 27-47 (LAELGLRVCAVPLAVASVWEM). Residues 48 to 70 (ATNKQVDETYGEVRFSDLSGFRY) are Extracellular-facing. A helical membrane pass occupies residues 71 to 91 (LVWINAITAAYSVASILLSSC). At 92 to 98 (RFITRFD) the chain is on the cytoplasmic side. Residues 99 to 119 (WLIFILDQASAYLLLTSASAA) traverse the membrane as a helical segment. Over 120-148 (AEVVYLAREGDREVSWGEVCSYFGRFCGA) the chain is Extracellular. A helical transmembrane segment spans residues 149–169 (ATVSVALNAAALLCFMALSLI). At 170 to 201 (SAFRVFTKFNPPSQSNSKQQLSQEQGKPVVSG) the chain is on the cytoplasmic side. A compositionally biased stretch (polar residues) spans 180–194 (PPSQSNSKQQLSQEQ). The tract at residues 180 to 201 (PPSQSNSKQQLSQEQGKPVVSG) is disordered.

This sequence belongs to the Casparian strip membrane proteins (CASP) family. Homodimer and heterodimers.

The protein localises to the cell membrane. The chain is CASP-like protein 2D1 from Oryza sativa subsp. indica (Rice).